A 299-amino-acid chain; its full sequence is Tyrosine recombinase XerC (299 aa).

The Core-binding (CB) domain occupies 1–85; the sequence is MDQHLDAYCM…AVRGFYKYLN (85 aa). Positions 106–285 constitute a Tyr recombinase domain; the sequence is RLPKTLDTDR…DFQHLATVYD (180 aa). Active-site residues include Arg-146, Lys-170, His-237, Arg-240, and His-263. Tyr-272 acts as the O-(3'-phospho-DNA)-tyrosine intermediate in catalysis.

The protein belongs to the 'phage' integrase family. XerC subfamily. Forms a cyclic heterotetrameric complex composed of two molecules of XerC and two molecules of XerD.

The protein localises to the cytoplasm. Its function is as follows. Site-specific tyrosine recombinase, which acts by catalyzing the cutting and rejoining of the recombining DNA molecules. The XerC-XerD complex is essential to convert dimers of the bacterial chromosome into monomers to permit their segregation at cell division. It also contributes to the segregational stability of plasmids. This chain is Tyrosine recombinase XerC, found in Pseudomonas syringae pv. syringae (strain B728a).